Consider the following 244-residue polypeptide: Phosphoadenosine 5'-phosphosulfate reductase (244 aa).

C239 (nucleophile; cysteine thiosulfonate intermediate) is an active-site residue.

Belongs to the PAPS reductase family. CysH subfamily.

It localises to the cytoplasm. It carries out the reaction [thioredoxin]-disulfide + sulfite + adenosine 3',5'-bisphosphate + 2 H(+) = [thioredoxin]-dithiol + 3'-phosphoadenylyl sulfate. It functions in the pathway sulfur metabolism; hydrogen sulfide biosynthesis; sulfite from sulfate: step 3/3. Its function is as follows. Catalyzes the formation of sulfite from phosphoadenosine 5'-phosphosulfate (PAPS) using thioredoxin as an electron donor. The protein is Phosphoadenosine 5'-phosphosulfate reductase of Escherichia coli O6:K15:H31 (strain 536 / UPEC).